Consider the following 856-residue polypeptide: DNA gyrase subunit A (856 aa).

Positions 45-517 (LPDARDGLKP…DDGTVTHEDL (473 aa)) constitute a Topo IIA-type catalytic domain. Residue tyrosine 133 is the O-(5'-phospho-DNA)-tyrosine intermediate of the active site. Positions 544 to 550 (QHRGGKG) match the GyrA-box motif. Residues 822–856 (TVASVDTHPRTDDSSEADSGDGESESENATATTPS) are disordered. Over residues 835–847 (SSEADSGDGESES) the composition is skewed to acidic residues.

It belongs to the type II topoisomerase GyrA/ParC subunit family. In terms of assembly, heterotetramer, composed of two GyrA and two GyrB chains. In the heterotetramer, GyrA contains the active site tyrosine that forms a transient covalent intermediate with DNA, while GyrB binds cofactors and catalyzes ATP hydrolysis.

It is found in the cytoplasm. It carries out the reaction ATP-dependent breakage, passage and rejoining of double-stranded DNA.. Its function is as follows. A type II topoisomerase that negatively supercoils closed circular double-stranded (ds) DNA in an ATP-dependent manner to modulate DNA topology and maintain chromosomes in an underwound state. Negative supercoiling favors strand separation, and DNA replication, transcription, recombination and repair, all of which involve strand separation. Also able to catalyze the interconversion of other topological isomers of dsDNA rings, including catenanes and knotted rings. Type II topoisomerases break and join 2 DNA strands simultaneously in an ATP-dependent manner. In Haloquadratum walsbyi (strain DSM 16790 / HBSQ001), this protein is DNA gyrase subunit A.